Consider the following 1089-residue polypeptide: Probable transport protein MmpL8 (1089 aa).

The disordered stretch occupies residues 1–26; sequence MCDVLMQPVRTPRPSTNLRSKPLRPT. 12 helical membrane passes run 44 to 64, 222 to 242, 257 to 277, 316 to 336, 349 to 369, 400 to 420, 555 to 575, 874 to 894, 898 to 918, 930 to 950, 973 to 993, and 996 to 1016; these read WVVI…VPSL, ITIL…TMVL, LVAI…IFMS, IGKV…GMVF, LGIS…ALMV, KTHL…AGLA, AIST…LLGG, IIAM…RAIV, YLIG…VIVF, IPGL…MLLI, GGVI…LVFA, and GSVV…TFLV. The interval 1056–1078 is disordered; it reads RTKRKPLLPKEEEEQSPPDDDDL. The segment covering 1066 to 1078 has biased composition (acidic residues); that stretch reads EEEEQSPPDDDDL.

This sequence belongs to the resistance-nodulation-cell division (RND) (TC 2.A.6) family. MmpL subfamily.

It is found in the cell membrane. This is Probable transport protein MmpL8 (mmpL8) from Mycobacterium bovis (strain ATCC BAA-935 / AF2122/97).